Here is a 463-residue protein sequence, read N- to C-terminus: Dipeptidyl peptidase 1 (463 aa).

A signal peptide spans 1–24 (MGVGPASLLAALLLLLSGDRAVRC). Asn-29, Asn-53, and Asn-119 each carry an N-linked (GlcNAc...) asparagine glycan. Cystine bridges form between Cys-30–Cys-118, Cys-54–Cys-136, Cys-255–Cys-298, Cys-291–Cys-331, and Cys-321–Cys-337. The propeptide occupies 135 to 230 (ACFTGKKVGT…TAEIQQKILH (96 aa)). Cys-258 is a catalytic residue. N-linked (GlcNAc...) asparagine glycosylation is present at Asn-276. Chloride contacts are provided by Phe-302 and Tyr-304. Tyr-347 contacts chloride. Residues His-405 and Asn-427 contribute to the active site.

The protein belongs to the peptidase C1 family. In terms of assembly, tetramer of heterotrimers consisting of exclusion domain, heavy- and light chains. Requires chloride as cofactor.

It is found in the lysosome. It catalyses the reaction Release of an N-terminal dipeptide, Xaa-Yaa-|-Zaa-, except when Xaa is Arg or Lys, or Yaa or Zaa is Pro.. Its function is as follows. Thiol protease. Has dipeptidylpeptidase activity. Active against a broad range of dipeptide substrates composed of both polar and hydrophobic amino acids. Proline cannot occupy the P1 position and arginine cannot occupy the P2 position of the substrate. Can act as both an exopeptidase and endopeptidase. Activates serine proteases such as elastase, cathepsin G and granzymes A and B. The protein is Dipeptidyl peptidase 1 (CTSC) of Macaca fascicularis (Crab-eating macaque).